An 868-amino-acid polypeptide reads, in one-letter code: Probable inorganic carbon transporter subunit DabA (868 aa).

Zn(2+)-binding residues include Cys392, Asp394, His574, and Cys589.

It belongs to the inorganic carbon transporter (TC 9.A.2) DabA family. As to quaternary structure, forms a complex with DabB. Zn(2+) serves as cofactor.

It is found in the cell membrane. Its function is as follows. Part of an energy-coupled inorganic carbon pump. In Bacillus cereus (strain B4264), this protein is Probable inorganic carbon transporter subunit DabA.